The following is a 209-amino-acid chain: MTQASAKFIVVEGLEGAGKSSAIALIRDFIEKHTGLAPVCTREPGGTPLAERIRDLVKIADPSDPLCDESECLLIYAARAQLVANVIKPALAEGKWVLGDRHNLSSLAYQGGGRGLMPLVEAVSNATLKGFKPDLTLYLDLDPKLGLLRAAKRGELDRIEQQAIDFFERARATYLKLASEDERIVVIDASQTMAEVHKDILAVLQAMAW.

13–20 is an ATP binding site; the sequence is GLEGAGKS.

It belongs to the thymidylate kinase family.

It carries out the reaction dTMP + ATP = dTDP + ADP. Functionally, phosphorylation of dTMP to form dTDP in both de novo and salvage pathways of dTTP synthesis. The chain is Thymidylate kinase from Shewanella sp. (strain ANA-3).